The chain runs to 1918 residues: NFX1-type zinc finger-containing protein 1 (1918 aa).

Residues 1 to 12 (MEERRPHLDARP) show a composition bias toward basic and acidic residues. 2 disordered regions span residues 1–58 (MEER…RANN) and 75–140 (RNPH…QPQQ). Positions 30–42 (RARNQANNPPANA) are enriched in low complexity. Residues 82–105 (RNQEGHASDEARDQRHDQENDTRW) show a composition bias toward basic and acidic residues. Over residues 120–129 (SNDNFQQWRT) the composition is skewed to polar residues. The stretch at 286–313 (DIEEETEKNLEKVQTIIEHLQEKRREGT) forms a coiled coil. Disordered stretches follow at residues 796–819 (SVSP…GEEE) and 876–896 (TAAG…QKKK). Over residues 809–819 (EGDEEEEGEEE) the composition is skewed to acidic residues. The span at 877–887 (AAGQEQATGEW) shows a compositional bias: polar residues. Residues 886-967 (EWQTQRNQKK…TSAERMAELR (82 aa)) are a coiled coil. 6 NF-X1-type zinc fingers span residues 1298 to 1320 (CGHV…QCMK), 1330 to 1346 (GHRC…PCQV), 1382 to 1400 (CGHR…LCSE), 1441 to 1463 (CGHP…RCQQ), 1471 to 1488 (CSHK…PCQR), and 1546 to 1564 (CGHP…KCRI). A coiled-coil region spans residues 1741–1820 (LAKKRLSFTS…EKMEALKATL (80 aa)). The RZ-type zinc-finger motif lies at 1827-1898 (ISEEERVQIV…LASEMDGAQH (72 aa)). The Zn(2+) site is built by Cys1849, His1853, Cys1869, and Cys1872.

It belongs to the ZNFX1 family. Interacts with MAVS. Widely expressed.

It is found in the mitochondrion outer membrane. The protein resides in the cytoplasm. Its subcellular location is the stress granule. RNA-binding protein that initiates the antiviral response and is required to restrict the replication of RNA viruses. Acts as a double-stranded RNA (dsRNA) sensor that recognizes viral RNA and then interacts with MAVS to initiate the type I interferon response. Also required for immunity against some bacteria, such as mycobacteria. The protein is NFX1-type zinc finger-containing protein 1 of Homo sapiens (Human).